A 541-amino-acid chain; its full sequence is Glucose-6-phosphate isomerase (541 aa).

Glu-346 acts as the Proton donor in catalysis. Catalysis depends on residues His-377 and Lys-506.

This sequence belongs to the GPI family.

The protein resides in the cytoplasm. It catalyses the reaction alpha-D-glucose 6-phosphate = beta-D-fructose 6-phosphate. Its pathway is carbohydrate biosynthesis; gluconeogenesis. The protein operates within carbohydrate degradation; glycolysis; D-glyceraldehyde 3-phosphate and glycerone phosphate from D-glucose: step 2/4. Its function is as follows. Catalyzes the reversible isomerization of glucose-6-phosphate to fructose-6-phosphate. The protein is Glucose-6-phosphate isomerase of Sinorhizobium medicae (strain WSM419) (Ensifer medicae).